A 239-amino-acid chain; its full sequence is tRNA (guanine-N(7)-)-methyltransferase (239 aa).

Positions 69, 94, 121, and 144 each coordinate S-adenosyl-L-methionine. Residue Asp-144 is part of the active site. Residue Lys-148 participates in substrate binding. Residues 150–155 form an interaction with RNA region; the sequence is RHNKRR. Substrate-binding positions include Asp-180 and 217-220; that span reads TKFE.

This sequence belongs to the class I-like SAM-binding methyltransferase superfamily. TrmB family. In terms of assembly, monomer.

The catalysed reaction is guanosine(46) in tRNA + S-adenosyl-L-methionine = N(7)-methylguanosine(46) in tRNA + S-adenosyl-L-homocysteine. It participates in tRNA modification; N(7)-methylguanine-tRNA biosynthesis. In terms of biological role, catalyzes the formation of N(7)-methylguanine at position 46 (m7G46) in tRNA. This chain is tRNA (guanine-N(7)-)-methyltransferase, found in Serratia proteamaculans (strain 568).